Here is a 440-residue protein sequence, read N- to C-terminus: Metacaspase-1 (440 aa).

The segment at 1–134 (MFPGSGRKTY…NPQGFGQNSG (134 aa)) is disordered. Residues 14–51 (APPPGPPNGYQYGPPPGAQGQYPPPQGYPPQGYPPQGY) show a composition bias toward pro residues. Low complexity predominate over residues 52-81 (PPQGYAPQGYPPQGYAPQGYAPQGYQQQGG). Gly residues predominate over residues 82–94 (QQQGGQQQGGQQQ). Positions 98–110 (RQTYATQEAQNFG) are enriched in polar residues. Active-site residues include His-230 and Cys-286.

Belongs to the peptidase C14B family.

Its function is as follows. Involved in cell death (apoptosis). The chain is Metacaspase-1 (MCA1) from Debaryomyces hansenii (strain ATCC 36239 / CBS 767 / BCRC 21394 / JCM 1990 / NBRC 0083 / IGC 2968) (Yeast).